The chain runs to 94 residues: DNA-directed RNA polymerase subunit omega (94 aa).

It belongs to the RNA polymerase subunit omega family. The RNAP catalytic core consists of 2 alpha, 1 beta, 1 beta' and 1 omega subunit. When a sigma factor is associated with the core the holoenzyme is formed, which can initiate transcription.

It catalyses the reaction RNA(n) + a ribonucleoside 5'-triphosphate = RNA(n+1) + diphosphate. Functionally, promotes RNA polymerase assembly. Latches the N- and C-terminal regions of the beta' subunit thereby facilitating its interaction with the beta and alpha subunits. The protein is DNA-directed RNA polymerase subunit omega of Tolumonas auensis (strain DSM 9187 / NBRC 110442 / TA 4).